The chain runs to 338 residues: RNA 3'-terminal phosphate cyclase (338 aa).

ATP contacts are provided by residues Q103 and 283 to 287 (YLADQ). Residue H308 is the Tele-AMP-histidine intermediate of the active site.

The protein belongs to the RNA 3'-terminal cyclase family. Type 1 subfamily.

The protein resides in the cytoplasm. It carries out the reaction a 3'-end 3'-phospho-ribonucleotide-RNA + ATP = a 3'-end 2',3'-cyclophospho-ribonucleotide-RNA + AMP + diphosphate. In terms of biological role, catalyzes the conversion of 3'-phosphate to a 2',3'-cyclic phosphodiester at the end of RNA. The mechanism of action of the enzyme occurs in 3 steps: (A) adenylation of the enzyme by ATP; (B) transfer of adenylate to an RNA-N3'P to produce RNA-N3'PP5'A; (C) and attack of the adjacent 2'-hydroxyl on the 3'-phosphorus in the diester linkage to produce the cyclic end product. The biological role of this enzyme is unknown but it is likely to function in some aspects of cellular RNA processing. The sequence is that of RNA 3'-terminal phosphate cyclase from Escherichia coli O6:K15:H31 (strain 536 / UPEC).